A 2662-amino-acid chain; its full sequence is Centrosome-associated protein CEP250L1 (2662 aa).

Coiled coils occupy residues lysine 1030–glutamate 1248 and alanine 1281–glutamine 1719.

It is found in the cytoplasm. It localises to the cytoskeleton. The protein localises to the microtubule organizing center. The protein resides in the centrosome. Part of the centrosome inner core complex. Plays a role in the formation and/or stabilization of the mitotic spindle. Required for proper nuclear segregation and DNA partitioning during cell division. This is Centrosome-associated protein CEP250L1 from Toxoplasma gondii (strain ATCC 50611 / Me49).